The following is a 72-amino-acid chain: Putative beta-neurotoxin (72 aa).

A signal peptide spans 1 to 7 (IDMVVEC). Residues 9 to 71 (KDGYLMEHDG…TWSRATNRCG (63 aa)) enclose the LCN-type CS-alpha/beta domain. Disulfide bonds link cysteine 19/cysteine 70, cysteine 23/cysteine 45, cysteine 31/cysteine 51, and cysteine 35/cysteine 53.

In terms of tissue distribution, expressed by the venom gland.

It localises to the secreted. Its function is as follows. Beta toxins bind voltage-independently at site-4 of sodium channels (Nav) and shift the voltage of activation toward more negative potentials thereby affecting sodium channel activation and promoting spontaneous and repetitive firing. In Tityus pachyurus (Colombian scorpion), this protein is Putative beta-neurotoxin.